A 163-amino-acid polypeptide reads, in one-letter code: Steroid receptor-associated and regulated protein (163 aa).

Residues 1–16 (MAFSKDPRRTSLRDSS) show a composition bias toward basic and acidic residues. Disordered regions lie at residues 1-30 (MAFS…CAPK) and 96-149 (ALDG…EKVK). Over residues 17–26 (VEMSSGTQPS) the composition is skewed to polar residues.

As to quaternary structure, interacts with 14-3-3 proteins.

May regulate the transcriptional function of androgen and estrogen receptors. The polypeptide is Steroid receptor-associated and regulated protein (Mus musculus (Mouse)).